We begin with the raw amino-acid sequence, 947 residues long: Translation initiation factor IF-2 (947 aa).

The tract at residues 47-332 is disordered; sequence LRESFGGGKS…RGRKSKRAKR (286 aa). Positions 86–95 are enriched in basic and acidic residues; that stretch reads APDRSLDAAL. A compositionally biased stretch (pro residues) spans 105-123; that stretch reads APVPAPAPAPTPAPAPAPA. A compositionally biased stretch (low complexity) spans 131–145; sequence APPAATPAAPAASAA. 2 stretches are compositionally biased toward pro residues: residues 146 to 171 and 210 to 225; these read PAPP…PQAP and PRPQ…PGAP. Residues 255–318 show a composition bias toward gly residues; that stretch reads RPGGGRPGGP…GAAGAFGRPG (64 aa). A compositionally biased stretch (basic residues) spans 322–331; sequence RRGRKSKRAK. The 172-residue stretch at 443–614 folds into the tr-type G domain; it reads TRPPVVTVMG…AVLLTADAAL (172 aa). The G1 stretch occupies residues 452 to 459; the sequence is GHVDHGKT. 452 to 459 serves as a coordination point for GTP; the sequence is GHVDHGKT. Residues 477-481 form a G2 region; the sequence is GITQH. Residues 502 to 505 form a G3 region; the sequence is DTPG. GTP contacts are provided by residues 502–506 and 556–559; these read DTPGH and NKID. Positions 556–559 are G4; sequence NKID. Residues 592–594 form a G5 region; that stretch reads SAK.

The protein belongs to the TRAFAC class translation factor GTPase superfamily. Classic translation factor GTPase family. IF-2 subfamily.

It is found in the cytoplasm. In terms of biological role, one of the essential components for the initiation of protein synthesis. Protects formylmethionyl-tRNA from spontaneous hydrolysis and promotes its binding to the 30S ribosomal subunits. Also involved in the hydrolysis of GTP during the formation of the 70S ribosomal complex. In Mycobacterium marinum (strain ATCC BAA-535 / M), this protein is Translation initiation factor IF-2.